The sequence spans 306 residues: Ribosomal protein L11 methyltransferase (306 aa).

S-adenosyl-L-methionine contacts are provided by T139, G173, D195, and N242.

This sequence belongs to the methyltransferase superfamily. PrmA family.

It is found in the cytoplasm. It catalyses the reaction L-lysyl-[protein] + 3 S-adenosyl-L-methionine = N(6),N(6),N(6)-trimethyl-L-lysyl-[protein] + 3 S-adenosyl-L-homocysteine + 3 H(+). Its function is as follows. Methylates ribosomal protein L11. The sequence is that of Ribosomal protein L11 methyltransferase from Trichormus variabilis (strain ATCC 29413 / PCC 7937) (Anabaena variabilis).